The following is a 268-amino-acid chain: Ribosome maturation factor RimP (268 aa).

Disordered regions lie at residues 1–41 and 223–268; these read MGSA…GRGG and LVEP…EMTR. The segment covering 32-41 has biased composition (low complexity); the sequence is PSGSARGRGG. Basic and acidic residues predominate over residues 248–257; the sequence is ESNDDGREAG.

Belongs to the RimP family.

It is found in the cytoplasm. Required for maturation of 30S ribosomal subunits. This Frankia casuarinae (strain DSM 45818 / CECT 9043 / HFP020203 / CcI3) protein is Ribosome maturation factor RimP.